The sequence spans 616 residues: Chaperone protein HscA homolog (616 aa).

The protein belongs to the heat shock protein 70 family.

In terms of biological role, chaperone involved in the maturation of iron-sulfur cluster-containing proteins. Has a low intrinsic ATPase activity which is markedly stimulated by HscB. The sequence is that of Chaperone protein HscA homolog from Aliivibrio fischeri (strain ATCC 700601 / ES114) (Vibrio fischeri).